The sequence spans 165 residues: Sporulation-specific cell division protein SsgB (165 aa).

The tract at residues 1-21 is disordered; that stretch reads MLVGNSWTRSLEPVSGHEHTE.

It belongs to the SsgA family. Interacts with SsgA. Interacts with FtsZ (via N-terminus).

The protein resides in the cell septum. In terms of biological role, involved in sporulation-specific cell division. Required for early stages of sporulation. Important in the process of growth cessation prior to sporulation-specific cell division. Recruits cell division protein FtsZ to the future septum sites and tethers the contractile ring structure (Z ring) to the cytoplasmic membrane during sporulation. Stimulates polymerization and filament length of FtsZ in vitro. The protein is Sporulation-specific cell division protein SsgB of Kineococcus radiotolerans (strain ATCC BAA-149 / DSM 14245 / SRS30216).